A 402-amino-acid chain; its full sequence is Phosphoglycerate kinase (402 aa).

Substrate-binding positions include 21–23, Arg-36, 59–62, Arg-114, and Arg-147; these read DLN and HLGR. ATP is bound by residues Lys-202, Glu-329, and 355-358; that span reads GGDT.

The protein belongs to the phosphoglycerate kinase family. Monomer.

It is found in the cytoplasm. It carries out the reaction (2R)-3-phosphoglycerate + ATP = (2R)-3-phospho-glyceroyl phosphate + ADP. It functions in the pathway carbohydrate degradation; glycolysis; pyruvate from D-glyceraldehyde 3-phosphate: step 2/5. This is Phosphoglycerate kinase from Psychrobacter sp. (strain PRwf-1).